The primary structure comprises 333 residues: Adenosine deaminase (333 aa).

Residues H12 and H14 each contribute to the Zn(2+) site. Positions 14, 16, and 170 each coordinate substrate. H197 is a binding site for Zn(2+). The active-site Proton donor is the E200. D278 lines the Zn(2+) pocket. Substrate is bound at residue D279.

It belongs to the metallo-dependent hydrolases superfamily. Adenosine and AMP deaminases family. Adenosine deaminase subfamily. Zn(2+) is required as a cofactor.

It catalyses the reaction adenosine + H2O + H(+) = inosine + NH4(+). It carries out the reaction 2'-deoxyadenosine + H2O + H(+) = 2'-deoxyinosine + NH4(+). In terms of biological role, catalyzes the hydrolytic deamination of adenosine and 2-deoxyadenosine. The protein is Adenosine deaminase of Edwardsiella ictaluri (strain 93-146).